The sequence spans 160 residues: Small ribosomal subunit protein uS7 (160 aa).

The protein belongs to the universal ribosomal protein uS7 family. Part of the 30S ribosomal subunit. Contacts proteins S9 and S11.

Functionally, one of the primary rRNA binding proteins, it binds directly to 16S rRNA where it nucleates assembly of the head domain of the 30S subunit. Is located at the subunit interface close to the decoding center, probably blocks exit of the E-site tRNA. The sequence is that of Small ribosomal subunit protein uS7 from Rickettsia canadensis (strain McKiel).